A 118-amino-acid chain; its full sequence is MISKPDKNKIRQKRHRRVRGKLSGTADRPRLNIFRSNTGIYAQVIDDVAGVTLASASTLDKEVSNGTKTEQAVVVGKLVAERAVAKGISEVVFDRGGYLYHGRVKALADSARENGLKF.

Positions 1–24 are disordered; it reads MISKPDKNKIRQKRHRRVRGKLSG. The segment covering 10–20 has biased composition (basic residues); that stretch reads IRQKRHRRVRG.

It belongs to the universal ribosomal protein uL18 family. In terms of assembly, part of the 50S ribosomal subunit; part of the 5S rRNA/L5/L18/L25 subcomplex. Contacts the 5S and 23S rRNAs.

This is one of the proteins that bind and probably mediate the attachment of the 5S RNA into the large ribosomal subunit, where it forms part of the central protuberance. This chain is Large ribosomal subunit protein uL18, found in Streptococcus agalactiae serotype III (strain NEM316).